Reading from the N-terminus, the 339-residue chain is Aspartate carbamoyltransferase catalytic subunit (339 aa).

2 residues coordinate carbamoyl phosphate: Arg59 and Thr60. Position 87 (Lys87) interacts with L-aspartate. Positions 109, 142, and 145 each coordinate carbamoyl phosphate. Positions 182 and 253 each coordinate L-aspartate. Carbamoyl phosphate-binding residues include Gly294 and Pro295.

The protein belongs to the aspartate/ornithine carbamoyltransferase superfamily. ATCase family. Heterododecamer (2C3:3R2) of six catalytic PyrB chains organized as two trimers (C3), and six regulatory PyrI chains organized as three dimers (R2).

The catalysed reaction is carbamoyl phosphate + L-aspartate = N-carbamoyl-L-aspartate + phosphate + H(+). It functions in the pathway pyrimidine metabolism; UMP biosynthesis via de novo pathway; (S)-dihydroorotate from bicarbonate: step 2/3. Its function is as follows. Catalyzes the condensation of carbamoyl phosphate and aspartate to form carbamoyl aspartate and inorganic phosphate, the committed step in the de novo pyrimidine nucleotide biosynthesis pathway. The protein is Aspartate carbamoyltransferase catalytic subunit of Prochlorococcus marinus (strain NATL1A).